We begin with the raw amino-acid sequence, 921 residues long: Protein translocase subunit SecA (921 aa).

ATP-binding positions include glutamine 86, glycine 104–threonine 108, and aspartate 512. Cysteine 905, cysteine 907, cysteine 916, and histidine 917 together coordinate Zn(2+).

It belongs to the SecA family. Monomer and homodimer. Part of the essential Sec protein translocation apparatus which comprises SecA, SecYEG and auxiliary proteins SecDF-YajC and YidC. Requires Zn(2+) as cofactor.

It localises to the cell inner membrane. The protein resides in the cytoplasm. The enzyme catalyses ATP + H2O + cellular proteinSide 1 = ADP + phosphate + cellular proteinSide 2.. Its function is as follows. Part of the Sec protein translocase complex. Interacts with the SecYEG preprotein conducting channel. Has a central role in coupling the hydrolysis of ATP to the transfer of proteins into and across the cell membrane, serving both as a receptor for the preprotein-SecB complex and as an ATP-driven molecular motor driving the stepwise translocation of polypeptide chains across the membrane. This chain is Protein translocase subunit SecA, found in Caulobacter sp. (strain K31).